The chain runs to 317 residues: USG-1 protein homolog (317 aa).

It belongs to the aspartate-semialdehyde dehydrogenase family.

The protein is USG-1 protein homolog (usg) of Haemophilus influenzae (strain ATCC 51907 / DSM 11121 / KW20 / Rd).